The sequence spans 498 residues: Glycerol kinase (498 aa).

Threonine 12 contributes to the ADP binding site. Threonine 12, threonine 13, and serine 14 together coordinate ATP. Sn-glycerol 3-phosphate is bound at residue threonine 12. Arginine 16 lines the ADP pocket. Residues arginine 82, glutamate 83, tyrosine 134, and aspartate 243 each contribute to the sn-glycerol 3-phosphate site. Glycerol is bound by residues arginine 82, glutamate 83, tyrosine 134, aspartate 243, and glutamine 244. ADP is bound by residues threonine 265 and glycine 308. ATP contacts are provided by threonine 265, glycine 308, glutamine 312, and glycine 409. ADP-binding residues include glycine 409 and asparagine 413.

Belongs to the FGGY kinase family.

It catalyses the reaction glycerol + ATP = sn-glycerol 3-phosphate + ADP + H(+). Its pathway is polyol metabolism; glycerol degradation via glycerol kinase pathway; sn-glycerol 3-phosphate from glycerol: step 1/1. Its activity is regulated as follows. Inhibited by fructose 1,6-bisphosphate (FBP). Its function is as follows. Key enzyme in the regulation of glycerol uptake and metabolism. Catalyzes the phosphorylation of glycerol to yield sn-glycerol 3-phosphate. The sequence is that of Glycerol kinase from Petrotoga mobilis (strain DSM 10674 / SJ95).